Reading from the N-terminus, the 80-residue chain is Protein FAM229B (80 aa).

The tract at residues 1-45 is disordered; it reads MPFRFGTQPRRFPVEGGDSSIELESGLSSSASCNGKETSPNRQLR. The span at 15–32 shows a compositional bias: low complexity; that stretch reads EGGDSSIELESGLSSSAS. Residues 33–42 show a composition bias toward polar residues; that stretch reads CNGKETSPNR.

This sequence belongs to the FAM229 family.

The protein is Protein FAM229B (Fam229b) of Rattus norvegicus (Rat).